The following is a 137-amino-acid chain: Small heat shock protein IbpA (137 aa).

The 110-residue stretch at 28-137 folds into the sHSP domain; that stretch reads SQSNGGYPPY…ANKPRRIEIN (110 aa).

It belongs to the small heat shock protein (HSP20) family. In terms of assembly, monomer. Forms homomultimers of about 100-150 subunits at optimal growth temperatures. Conformation changes to monomers at high temperatures or high ionic concentrations.

Its subcellular location is the cytoplasm. Its function is as follows. Associates with aggregated proteins, together with IbpB, to stabilize and protect them from irreversible denaturation and extensive proteolysis during heat shock and oxidative stress. Aggregated proteins bound to the IbpAB complex are more efficiently refolded and reactivated by the ATP-dependent chaperone systems ClpB and DnaK/DnaJ/GrpE. Its activity is ATP-independent. This Klebsiella pneumoniae (strain 342) protein is Small heat shock protein IbpA.